Here is a 185-residue protein sequence, read N- to C-terminus: Ribosome-recycling factor (185 aa).

The segment at 141–160 is disordered; sequence RIQKDGEAGEDEVGRAEKEL.

This sequence belongs to the RRF family.

The protein resides in the cytoplasm. Functionally, responsible for the release of ribosomes from messenger RNA at the termination of protein biosynthesis. May increase the efficiency of translation by recycling ribosomes from one round of translation to another. The chain is Ribosome-recycling factor from Rhodococcus jostii (strain RHA1).